We begin with the raw amino-acid sequence, 592 residues long: Aspartate--tRNA(Asp/Asn) ligase (592 aa).

Glu-172 is an L-aspartate binding site. Residues 196 to 199 form an aspartate region; sequence QLFK. Arg-218 provides a ligand contact to L-aspartate. ATP contacts are provided by residues 218-220 and Gln-227; that span reads RDE. Residue His-442 coordinates L-aspartate. Glu-476 is a binding site for ATP. Residue Arg-483 participates in L-aspartate binding. ATP is bound at residue 528–531; sequence GWDR. The interval 553–592 is disordered; that stretch reads SGTDPLTGAPTPITPEQRKEAGIDADPYAAAGRPPGRQSA.

This sequence belongs to the class-II aminoacyl-tRNA synthetase family. Type 1 subfamily. As to quaternary structure, homodimer.

It localises to the cytoplasm. The catalysed reaction is tRNA(Asx) + L-aspartate + ATP = L-aspartyl-tRNA(Asx) + AMP + diphosphate. Functionally, aspartyl-tRNA synthetase with relaxed tRNA specificity since it is able to aspartylate not only its cognate tRNA(Asp) but also tRNA(Asn). Reaction proceeds in two steps: L-aspartate is first activated by ATP to form Asp-AMP and then transferred to the acceptor end of tRNA(Asp/Asn). The protein is Aspartate--tRNA(Asp/Asn) ligase of Acidothermus cellulolyticus (strain ATCC 43068 / DSM 8971 / 11B).